Consider the following 468-residue polypeptide: Probable Xaa-Pro aminopeptidase PEPP (468 aa).

The Mn(2+) site is built by Asp-264, Asp-275, Glu-398, and Glu-438.

It belongs to the peptidase M24B family. It depends on Mn(2+) as a cofactor.

The catalysed reaction is Release of any N-terminal amino acid, including proline, that is linked to proline, even from a dipeptide or tripeptide.. Its function is as follows. Catalyzes the removal of a penultimate prolyl residue from the N-termini of peptides. The chain is Probable Xaa-Pro aminopeptidase PEPP (PEPP) from Paracoccidioides brasiliensis (strain Pb18).